The primary structure comprises 390 residues: Putative RING-H2 finger protein ATL12 (390 aa).

Positions Met1–Ala22 are cleaved as a signal peptide. Residues Leu41–Tyr61 traverse the membrane as a helical segment. The segment at Cys124–Arg166 adopts an RING-type; atypical zinc-finger fold.

The protein belongs to the RING-type zinc finger family. ATL subfamily.

It localises to the membrane. It catalyses the reaction S-ubiquitinyl-[E2 ubiquitin-conjugating enzyme]-L-cysteine + [acceptor protein]-L-lysine = [E2 ubiquitin-conjugating enzyme]-L-cysteine + N(6)-ubiquitinyl-[acceptor protein]-L-lysine.. The protein operates within protein modification; protein ubiquitination. The protein is Putative RING-H2 finger protein ATL12 (ATL12) of Arabidopsis thaliana (Mouse-ear cress).